The following is a 1603-amino-acid chain: DNA polymerase theta (1603 aa).

A Helicase ATP-binding domain is found at 38 to 208 (EARQFEDQHL…WLDGAKVFEA (171 aa)). ATP is bound at residue 51–58 (APTSAGKS). The DEAH box motif lies at 149 to 152 (DEMH). Residues 283-434 (TDSSLLEILK…GVLTRKRDAE (152 aa)) enclose the Helicase C-terminal domain.

It belongs to the DNA polymerase type-A family.

The protein resides in the nucleus. It catalyses the reaction DNA(n) + a 2'-deoxyribonucleoside 5'-triphosphate = DNA(n+1) + diphosphate. DNA polymerase that promotes microhomology-mediated end-joining (MMEJ), an alternative non-homologous end-joining (NHEJ) machinery triggered in response to double-strand breaks in DNA. MMEJ is an error-prone repair pathway that produces deletions of sequences from the strand being repaired and promotes genomic rearrangements, such as telomere fusions. Required to prevent extensive loss of sequences near G-quadruplex (G4) DNA sites, which are prone to cause genome alterations, by generating deletions. This Caenorhabditis elegans protein is DNA polymerase theta.